The following is a 166-amino-acid chain: Large ribosomal subunit protein uL10 (166 aa).

Belongs to the universal ribosomal protein uL10 family. In terms of assembly, part of the ribosomal stalk of the 50S ribosomal subunit. The N-terminus interacts with L11 and the large rRNA to form the base of the stalk. The C-terminus forms an elongated spine to which L12 dimers bind in a sequential fashion forming a multimeric L10(L12)X complex.

Its function is as follows. Forms part of the ribosomal stalk, playing a central role in the interaction of the ribosome with GTP-bound translation factors. This Bacillus mycoides (strain KBAB4) (Bacillus weihenstephanensis) protein is Large ribosomal subunit protein uL10.